Reading from the N-terminus, the 547-residue chain is Calcium-dependent protein kinase 16 (547 aa).

A disordered region spans residues 1–53; sequence MGNCCRSPAAAAREDVKTSHFPASTGGGKKKPHQARNGGGGGGGGGGGGWEKK. A lipid anchor (N-myristoyl glycine) is attached at glycine 2. A compositionally biased stretch (gly residues) spans 37-49; that stretch reads NGGGGGGGGGGGG. One can recognise a Protein kinase domain in the interval 73–331; sequence YALDRELGRG…AKQVLEHTWL (259 aa). Residues 79–87 and lysine 102 contribute to the ATP site; that span reads LGRGEFGVT. Aspartate 197 acts as the Proton acceptor in catalysis. Positions 337–367 are autoinhibitory domain; sequence APNVPLGDIVKSRLKQFSRMNRFKRRALRVI. EF-hand domains are found at residues 374–409, 410–445, 446–481, and 482–517; these read EEVEDIKDMFKVMDTDNDGIVSYEELKSGIAKFGSH, LAESEVQMLIEAVDTNGRGALDYGEFLAVSLHLQRM, ANGEHLRRAFLFFDKDGNGYIEPEELQEALVEDGAT, and DIMEVVKDILQEVDTDKDGKISYEEFVAMMKTGTDW. Aspartate 387, aspartate 389, aspartate 391, glutamate 398, aspartate 423, asparagine 425, glutamate 434, aspartate 459, aspartate 461, asparagine 463, tyrosine 465, glutamate 470, aspartate 495, aspartate 497, aspartate 499, lysine 501, and glutamate 506 together coordinate Ca(2+).

Belongs to the protein kinase superfamily. Ser/Thr protein kinase family. CDPK subfamily.

The protein localises to the membrane. It carries out the reaction L-seryl-[protein] + ATP = O-phospho-L-seryl-[protein] + ADP + H(+). It catalyses the reaction L-threonyl-[protein] + ATP = O-phospho-L-threonyl-[protein] + ADP + H(+). With respect to regulation, activated by calcium. Autophosphorylation may play an important role in the regulation of the kinase activity. In terms of biological role, may play a role in signal transduction pathways that involve calcium as a second messenger. The sequence is that of Calcium-dependent protein kinase 16 from Oryza sativa subsp. japonica (Rice).